A 165-amino-acid polypeptide reads, in one-letter code: Chorismate pyruvate-lyase (165 aa).

Substrate-binding residues include Met-35, Arg-77, Leu-115, and Glu-156.

The protein belongs to the UbiC family. As to quaternary structure, monomer.

It localises to the cytoplasm. The enzyme catalyses chorismate = 4-hydroxybenzoate + pyruvate. The protein operates within cofactor biosynthesis; ubiquinone biosynthesis. Its function is as follows. Removes the pyruvyl group from chorismate, with concomitant aromatization of the ring, to provide 4-hydroxybenzoate (4HB) for the ubiquinone pathway. The polypeptide is Chorismate pyruvate-lyase (Salmonella arizonae (strain ATCC BAA-731 / CDC346-86 / RSK2980)).